A 172-amino-acid polypeptide reads, in one-letter code: Small ribosomal subunit protein uS5 (172 aa).

In terms of domain architecture, S5 DRBM spans 16-79 (LKDRLVAINR…EAAKKNLIRV (64 aa)).

This sequence belongs to the universal ribosomal protein uS5 family. Part of the 30S ribosomal subunit. Contacts proteins S4 and S8.

Its function is as follows. With S4 and S12 plays an important role in translational accuracy. Located at the back of the 30S subunit body where it stabilizes the conformation of the head with respect to the body. The polypeptide is Small ribosomal subunit protein uS5 (Porphyromonas gingivalis (strain ATCC BAA-308 / W83)).